The sequence spans 263 residues: Putative TATA-binding protein pB263R (263 aa).

It belongs to the asfivirus B263R family.

In terms of biological role, putative TATA-binding protein. In African swine fever virus (isolate Pig/Kenya/KEN-50/1950) (ASFV), this protein is Putative TATA-binding protein pB263R.